The following is a 162-amino-acid chain: Ribosome maturation factor RimP (162 aa).

Belongs to the RimP family.

It is found in the cytoplasm. Its function is as follows. Required for maturation of 30S ribosomal subunits. This is Ribosome maturation factor RimP from Cupriavidus taiwanensis (strain DSM 17343 / BCRC 17206 / CCUG 44338 / CIP 107171 / LMG 19424 / R1) (Ralstonia taiwanensis (strain LMG 19424)).